The following is a 147-amino-acid chain: D-aminoacyl-tRNA deacylase (147 aa).

The short motif at 136-137 (GP) is the Gly-cisPro motif, important for rejection of L-amino acids element.

Belongs to the DTD family. As to quaternary structure, homodimer.

It is found in the cytoplasm. It catalyses the reaction glycyl-tRNA(Ala) + H2O = tRNA(Ala) + glycine + H(+). The enzyme catalyses a D-aminoacyl-tRNA + H2O = a tRNA + a D-alpha-amino acid + H(+). Functionally, an aminoacyl-tRNA editing enzyme that deacylates mischarged D-aminoacyl-tRNAs. Also deacylates mischarged glycyl-tRNA(Ala), protecting cells against glycine mischarging by AlaRS. Acts via tRNA-based rather than protein-based catalysis; rejects L-amino acids rather than detecting D-amino acids in the active site. By recycling D-aminoacyl-tRNA to D-amino acids and free tRNA molecules, this enzyme counteracts the toxicity associated with the formation of D-aminoacyl-tRNA entities in vivo and helps enforce protein L-homochirality. The protein is D-aminoacyl-tRNA deacylase of Nitratiruptor sp. (strain SB155-2).